Reading from the N-terminus, the 566-residue chain is Proline--tRNA ligase (566 aa).

The protein belongs to the class-II aminoacyl-tRNA synthetase family. ProS type 1 subfamily. As to quaternary structure, homodimer.

It is found in the cytoplasm. The catalysed reaction is tRNA(Pro) + L-proline + ATP = L-prolyl-tRNA(Pro) + AMP + diphosphate. In terms of biological role, catalyzes the attachment of proline to tRNA(Pro) in a two-step reaction: proline is first activated by ATP to form Pro-AMP and then transferred to the acceptor end of tRNA(Pro). As ProRS can inadvertently accommodate and process non-cognate amino acids such as alanine and cysteine, to avoid such errors it has two additional distinct editing activities against alanine. One activity is designated as 'pretransfer' editing and involves the tRNA(Pro)-independent hydrolysis of activated Ala-AMP. The other activity is designated 'posttransfer' editing and involves deacylation of mischarged Ala-tRNA(Pro). The misacylated Cys-tRNA(Pro) is not edited by ProRS. This Campylobacter concisus (strain 13826) protein is Proline--tRNA ligase.